We begin with the raw amino-acid sequence, 105 residues long: UPF0060 membrane protein Rmet_4032 (105 aa).

Transmembrane regions (helical) follow at residues 4-24, 28-48, 60-80, and 82-102; these read VGLY…PYLW, GASP…AWLL, AAYG…VDGV, and PSPW…IIVF.

Belongs to the UPF0060 family.

It localises to the cell inner membrane. This Cupriavidus metallidurans (strain ATCC 43123 / DSM 2839 / NBRC 102507 / CH34) (Ralstonia metallidurans) protein is UPF0060 membrane protein Rmet_4032.